Reading from the N-terminus, the 67-residue chain is uncharacterized protein (67 aa).

2 consecutive transmembrane segments (helical) span residues 6–26 (GQLWIVFMWVSGVVCGICVLM) and 38–58 (NNIIIIIIIIMMIKIMKIIII).

It is found in the membrane. This is an uncharacterized protein from Dictyostelium discoideum (Social amoeba).